The chain runs to 198 residues: Guanylate kinase (198 aa).

The region spanning K6–H192 is the Guanylate kinase-like domain. G13 to G20 contacts ATP.

Belongs to the guanylate kinase family.

It localises to the cytoplasm. The enzyme catalyses GMP + ATP = GDP + ADP. Essential for recycling GMP and indirectly, cGMP. The sequence is that of Guanylate kinase from Mycoplasmopsis synoviae (strain 53) (Mycoplasma synoviae).